A 117-amino-acid polypeptide reads, in one-letter code: Peptidyl-tRNA hydrolase (117 aa).

It belongs to the PTH2 family.

Its subcellular location is the cytoplasm. The catalysed reaction is an N-acyl-L-alpha-aminoacyl-tRNA + H2O = an N-acyl-L-amino acid + a tRNA + H(+). Functionally, the natural substrate for this enzyme may be peptidyl-tRNAs which drop off the ribosome during protein synthesis. This Thermoplasma acidophilum (strain ATCC 25905 / DSM 1728 / JCM 9062 / NBRC 15155 / AMRC-C165) protein is Peptidyl-tRNA hydrolase.